A 94-amino-acid chain; its full sequence is MALTKAEVEYVAMLARLELSEADLERYTTQLNAILDYAQRLQGLDTKDVPPTAHVFPLHNVMRDDRIDPSMERERIVANAPEEEDGFFRVPRIV.

Belongs to the GatC family. In terms of assembly, heterotrimer of A, B and C subunits.

The enzyme catalyses L-glutamyl-tRNA(Gln) + L-glutamine + ATP + H2O = L-glutaminyl-tRNA(Gln) + L-glutamate + ADP + phosphate + H(+). The catalysed reaction is L-aspartyl-tRNA(Asn) + L-glutamine + ATP + H2O = L-asparaginyl-tRNA(Asn) + L-glutamate + ADP + phosphate + 2 H(+). Functionally, allows the formation of correctly charged Asn-tRNA(Asn) or Gln-tRNA(Gln) through the transamidation of misacylated Asp-tRNA(Asn) or Glu-tRNA(Gln) in organisms which lack either or both of asparaginyl-tRNA or glutaminyl-tRNA synthetases. The reaction takes place in the presence of glutamine and ATP through an activated phospho-Asp-tRNA(Asn) or phospho-Glu-tRNA(Gln). The polypeptide is Aspartyl/glutamyl-tRNA(Asn/Gln) amidotransferase subunit C (Heliobacterium modesticaldum (strain ATCC 51547 / Ice1)).